The primary structure comprises 334 residues: Beta-glucanase (334 aa).

Residues 1–27 (MKNRVISLLMASLLLVLSVIVAPFYKA) form the signal peptide. The GH16 domain occupies 28–248 (EAATVVNTPF…YVKYYPNGVP (221 aa)). E136 serves as the catalytic Nucleophile. E140 functions as the Proton donor in the catalytic mechanism. The 68-residue stretch at 267–334 (NLPLKGDVNG…RYLIRAIPSL (68 aa)) folds into the Dockerin domain.

Belongs to the glycosyl hydrolase 16 family. May form part of a multienzyme complex (cellulosome).

It catalyses the reaction Hydrolysis of (1-&gt;4)-beta-D-glucosidic linkages in beta-D-glucans containing (1-&gt;3)- and (1-&gt;4)-bonds.. The protein is Beta-glucanase (licB) of Acetivibrio thermocellus (strain ATCC 27405 / DSM 1237 / JCM 9322 / NBRC 103400 / NCIMB 10682 / NRRL B-4536 / VPI 7372) (Clostridium thermocellum).